Reading from the N-terminus, the 108-residue chain is UPF0060 membrane protein Mflv_3127 (108 aa).

4 helical membrane-spanning segments follow: residues 7–27 (LLFV…WQGF), 32–52 (GWLW…VAAF), 61–81 (VLAA…MVAD), and 87–107 (RWDI…MYAP).

Belongs to the UPF0060 family.

It localises to the cell membrane. In Mycolicibacterium gilvum (strain PYR-GCK) (Mycobacterium gilvum (strain PYR-GCK)), this protein is UPF0060 membrane protein Mflv_3127.